The chain runs to 405 residues: Aspartokinase (405 aa).

7–10 (KYGG) provides a ligand contact to ATP. 25–30 (RIAHYR) contacts substrate. Serine 41 is a binding site for ATP. Residues 47 to 49 (TDE), glutamate 74, 125 to 126 (LD), 150 to 153 (RGGS), and serine 153 each bind substrate. Residues 173-174 (TD), 179-184 (YTTDPH), and arginine 209 contribute to the ATP site. ACT domains follow at residues 263–342 (IGLI…IAKV) and 344–405 (IVGV…LDKA). Residues aspartate 270, 274–275 (IA), 288–290 (AVD), glutamine 294, 355–356 (VP), 369–370 (NI), and 376–377 (SE) each bind substrate.

This sequence belongs to the aspartokinase family. As to quaternary structure, heterotetramer consisting of 2 isoforms Alpha (catalytic and regulation) and of a homodimer of 2 isoforms Beta (regulation and thermostability).

It carries out the reaction L-aspartate + ATP = 4-phospho-L-aspartate + ADP. It participates in amino-acid biosynthesis; L-lysine biosynthesis via DAP pathway; (S)-tetrahydrodipicolinate from L-aspartate: step 1/4. The protein operates within amino-acid biosynthesis; L-methionine biosynthesis via de novo pathway; L-homoserine from L-aspartate: step 1/3. It functions in the pathway amino-acid biosynthesis; L-threonine biosynthesis; L-threonine from L-aspartate: step 1/5. With respect to regulation, inhibited by threonine. Functionally, catalyzes the phosphorylation of the beta-carboxyl group of aspartic acid with ATP to yield 4-phospho-L-aspartate, which is involved in the branched biosynthetic pathway leading to the biosynthesis of amino acids threonine, isoleucine and methionine. This Thermus thermophilus protein is Aspartokinase (ask).